The chain runs to 1435 residues: MALEMDSKNSNSAVTGDAAAATTKTNKAKENNNLAGSKKNQSQNLVNGNGTAADGPATKKKGKKNRNKSPPVSTDEAALSNGHVEEKKPEGDGDADADANANVVAVKDEKAEGGDEADAAELDTEDIDLDALHDAGIHVNISCPGSELLTVQLSSMELVQEIHQLLMDREESCHRTCFSLQLDNVTLDNFAELKTIEQLESGSTIKVVEEPYTMREARIHVRHVRDLLKNLDPADAYNGIECTSLTYLNTITQGDLLDKKKTRPDSVDCTPPDYVTPGVFEPPLLPLHPNFKNAKGPQALKVLTTSAWNPPPGPRKLHGDLMYLYVITMEEKRYHISACSRGFFINQSTDDTFNPKPDNPSYLSHSLIDLLSHISPSFRRAFQAIQKRRTLRHAFERVATPYQVYQWAAPNLEHTVDAIRAEDAFSSKLGYEEHIPGQTRDWNEELQTTRELPRKTLPERLLRERAIFKVHGDFVTAATRGAMAVIDGNVLAINPGEDSKMQMFIWNNIFFSLGFDVRDHYKELGGDYAAYVAPRYDLHGVRVYNAVDVEGLYTLGTVVIDYRGYRVTAQSIIPGILEREQEQSVVYGSIDFGKTVLSHPKYLELLRQAGKHLKILPHSVYNERDEPVELCSSVECKGIIGNDGRHYILDLLRTFPPDVNFLKLQEVKLSTELVEMGFPIEHRHKLCCLRQELLEAFVEDRYVNFIRIAAVHLQQLNAKKPEETQSEEKKQLPAIEEAEKENKENLNVNETPNEKEKDTPVETKNAEAMVNAIREAQSNVATSNEIQAAEVVKQACAAVGSMKEKEFDFRFNPDVFSPGIRHVDGEEGTSGSVAKQKLLVQDAAEFLVVKQIPAFVKEHLSHSSPPIDGQNLTESLHSHGINVRYLGKVIKTLGQMPRMDYLYRIAVMELIVRATKHIYYTYMQSTDPMHLSVAISHFLNCLLTNGPINPVVSNDEMHKKRGGNGGKHNKHKSSKGGKGQQQPAINQNGGSTTSSSSSANAYDWTLVTPRSLWQQIRKESKAYWDWDLDCDSMDSAMNKFGIMRICLLRAFCLKVGIQVLLREYNFDSKHKPTFGDDDIVNVFPVVKHISPRASDAYNFYTTGQAKIQQGLFKEGYELISEALNLLNNVFGAMHQENGSCLRMLARLSYLLGDAQDALAIQQRAVIMSERVNGIDNPSTILEYTHLSLYSFANGHVGMSLKLLYRARYLLVLTCGEDHPEVALIDSNISLILHALGEYELSLRFIEHALKLNLKYFGNKAMHVAVSYHLMARTQSCMGDFRSALNNEKETYSIYKSQLGEKHEKTRDSAECLRLLTQQAVLLQRKMNDIYSNGKLTSDLPPIHITPPSMGSVLEMLNTINGILFVQISQRDIVKVRSEIEKRMKANTDVNEAIKSMVAAANNNGESEVLAPQDNNKEQAATAQQLTNGDKVAVSS.

The disordered stretch occupies residues 1-97 (MALEMDSKNS…KPEGDGDADA (97 aa)). Residues 18–35 (AAAATTKTNKAKENNNLA) are compositionally biased toward low complexity. Residues 38–50 (KKNQSQNLVNGNG) are compositionally biased toward polar residues. Basic residues predominate over residues 58–67 (TKKKGKKNRN). At Ser266 the chain carries Phosphoserine. Residues 420 to 662 (RAEDAFSSKL…RTFPPDVNFL (243 aa)) enclose the Clu domain. 2 stretches are compositionally biased toward basic and acidic residues: residues 719–731 (KKPE…EKKQ) and 752–762 (PNEKEKDTPVE). 2 disordered regions span residues 719 to 762 (KKPE…TPVE) and 952 to 998 (VSND…SSSS). Over residues 959–975 (KKRGGNGGKHNKHKSSK) the composition is skewed to basic residues. Over residues 988 to 998 (NGGSTTSSSSS) the composition is skewed to low complexity. TPR repeat units follow at residues 1096-1129 (AYNF…LNNV), 1222-1255 (ALID…NLKY), and 1257-1290 (GNKA…EKET). Positions 1407-1435 (EVLAPQDNNKEQAATAQQLTNGDKVAVSS) are disordered. The span at 1417–1435 (EQAATAQQLTNGDKVAVSS) shows a compositional bias: polar residues.

Belongs to the CLU family.

The protein localises to the cytoplasm. Its function is as follows. mRNA-binding protein involved in proper cytoplasmic distribution of mitochondria. This chain is Protein clueless, found in Drosophila persimilis (Fruit fly).